A 279-amino-acid chain; its full sequence is Inhibitor of growth protein 1 (279 aa).

The segment at 115–206 is disordered; sequence AHQDISDGTG…EASPADLPID (92 aa). Lys135 is covalently cross-linked (Glycyl lysine isopeptide (Lys-Gly) (interchain with G-Cter in SUMO2)). Basic and acidic residues predominate over residues 154–171; that stretch reads RNNENRENASNNHDHDDI. Residues 179–191 are compositionally biased toward basic residues; that stretch reads KKAKTSKKKKRSK. The PHD-type zinc-finger motif lies at 210-259; it reads PTYCLCNQVSYGEMIGCDNDECPIEWFHFSCVGLNHKPKGKWYCPKCRGE. Zn(2+) contacts are provided by Cys213, Cys215, Cys226, Cys231, His237, Cys240, Cys253, and Cys256. Residues 262–279 are PBR; that stretch reads KTMDKALEKSKKERAYNR.

The protein belongs to the ING family. Interacts with H3K4me3 and to a lesser extent with H3K4me2. Isoform 2 interacts with RSL1D1. As to expression, in the adult, widely expressed with highest levels in thymus and testis.

It is found in the nucleus. Isoform 1 inhibits p53-dependent transcriptional activation and may function as an oncoprotein. Isoform 2 acts as a negative growth regulator by cooperating with p53 in transcriptional activation of p53-responsive genes and may act as a tumor suppressor. This chain is Inhibitor of growth protein 1 (Ing1), found in Mus musculus (Mouse).